The sequence spans 141 residues: Large ribosomal subunit protein bL17 (141 aa).

This sequence belongs to the bacterial ribosomal protein bL17 family. As to quaternary structure, part of the 50S ribosomal subunit. Contacts protein L32.

This Allorhizobium ampelinum (strain ATCC BAA-846 / DSM 112012 / S4) (Agrobacterium vitis (strain S4)) protein is Large ribosomal subunit protein bL17.